A 91-amino-acid polypeptide reads, in one-letter code: Sec-independent protein translocase protein TatA (91 aa).

The chain crosses the membrane as a helical span at residues 1–21 (MGAMSPWHWAIVALVVIILFG). The segment at 44-91 (KEMQNDNSTPAPTAQQSAPAELPVADTTTAPVTPPAPVQPQHTEPKSA) is disordered. Low complexity predominate over residues 51–74 (STPAPTAQQSAPAELPVADTTTAP).

Belongs to the TatA/E family. As to quaternary structure, the Tat system comprises two distinct complexes: a TatABC complex, containing multiple copies of TatA, TatB and TatC subunits, and a separate TatA complex, containing only TatA subunits. Substrates initially bind to the TatABC complex, which probably triggers association of the separate TatA complex to form the active translocon.

The protein resides in the cell membrane. Functionally, part of the twin-arginine translocation (Tat) system that transports large folded proteins containing a characteristic twin-arginine motif in their signal peptide across membranes. TatA could form the protein-conducting channel of the Tat system. The polypeptide is Sec-independent protein translocase protein TatA (Rhodococcus jostii (strain RHA1)).